The chain runs to 405 residues: Low-salt glycan biosynthesis sulfotransferase Agl7 (405 aa).

Residues aspartate 24, aspartate 201, and histidine 202 each contribute to the Ca(2+) site.

The protein belongs to the sulfatase family. Requires Ca(2+) as cofactor.

It participates in protein modification; protein glycosylation. The protein operates within cell surface structure biogenesis; S-layer biogenesis. Its function is as follows. Involved in N-glycan biosynthetic pathway that takes place under low-salt conditions (1.75 M instead of 3.4 M). Participates in the formation of the tetrasaccharide present at 'Asn-532' of S-layer glycoprotein Csg, consisting of a sulfated hexose, 2 hexoses and rhamnose. Mediates sulfation of sugar 1 in the tetrasaccharide. The sequence is that of Low-salt glycan biosynthesis sulfotransferase Agl7 from Haloferax volcanii (strain ATCC 29605 / DSM 3757 / JCM 8879 / NBRC 14742 / NCIMB 2012 / VKM B-1768 / DS2) (Halobacterium volcanii).